Here is a 79-residue protein sequence, read N- to C-terminus: KSKWGKLWGKAKGVAKKGAKKVKKALLKALKKKLAKEMAKSKGVDYKEMKAKVMAMDKAKVLQEAMKILGKKAMDKYLS.

It belongs to the cationic peptide 06 (cytoinsectotoxin) family. As to expression, expressed by the venom gland.

Its subcellular location is the secreted. Its function is as follows. Insecticidal and antimicrobial peptide. Has insecticidal activity against larvae of flesh fly S.carnaria. Has antibacterial activity against Gram-positive bacterium B.subtilis B-501 (MIC=0.63 uM) and Gram-negative bacterium E.coli DH5alpha (MIC=2.5 uM). In Lachesana tarabaevi (Spider), this protein is Cytoinsectotoxin-3.